Consider the following 118-residue polypeptide: Large ribosomal subunit protein bL20 (118 aa).

The protein belongs to the bacterial ribosomal protein bL20 family.

In terms of biological role, binds directly to 23S ribosomal RNA and is necessary for the in vitro assembly process of the 50S ribosomal subunit. It is not involved in the protein synthesizing functions of that subunit. This Psychrobacter sp. (strain PRwf-1) protein is Large ribosomal subunit protein bL20.